A 393-amino-acid polypeptide reads, in one-letter code: Dual-specificity RNA methyltransferase RlmN (393 aa).

The active-site Proton acceptor is the glutamate 114. Residues glutamate 120–aspartate 359 form the Radical SAM core domain. Cysteines 127 and 364 form a disulfide. [4Fe-4S] cluster-binding residues include cysteine 134, cysteine 138, and cysteine 141. Residues glycine 188–glutamate 189, serine 220, serine 242–histidine 244, and asparagine 321 contribute to the S-adenosyl-L-methionine site. The S-methylcysteine intermediate role is filled by cysteine 364.

This sequence belongs to the radical SAM superfamily. RlmN family. It depends on [4Fe-4S] cluster as a cofactor.

It localises to the cytoplasm. The catalysed reaction is adenosine(2503) in 23S rRNA + 2 reduced [2Fe-2S]-[ferredoxin] + 2 S-adenosyl-L-methionine = 2-methyladenosine(2503) in 23S rRNA + 5'-deoxyadenosine + L-methionine + 2 oxidized [2Fe-2S]-[ferredoxin] + S-adenosyl-L-homocysteine. It catalyses the reaction adenosine(37) in tRNA + 2 reduced [2Fe-2S]-[ferredoxin] + 2 S-adenosyl-L-methionine = 2-methyladenosine(37) in tRNA + 5'-deoxyadenosine + L-methionine + 2 oxidized [2Fe-2S]-[ferredoxin] + S-adenosyl-L-homocysteine. Specifically methylates position 2 of adenine 2503 in 23S rRNA and position 2 of adenine 37 in tRNAs. m2A2503 modification seems to play a crucial role in the proofreading step occurring at the peptidyl transferase center and thus would serve to optimize ribosomal fidelity. This Actinobacillus pleuropneumoniae serotype 3 (strain JL03) protein is Dual-specificity RNA methyltransferase RlmN.